Consider the following 370-residue polypeptide: N-acyl-L-amino acid amidohydrolase (370 aa).

The protein belongs to the peptidase M20 family. Homotetramer. It depends on Co(2+) as a cofactor.

It catalyses the reaction an N-acyl-L-amino acid + H2O = an L-alpha-amino acid + a carboxylate. The enzyme catalyses an N-acetyl-L-cysteine-S-conjugate + H2O = an S-substituted L-cysteine + acetate. Functionally, hydrolyzes most efficiently N-acetyl derivatives of aromatic amino acids but is also active on other amino acids. L-stereospecific. The sequence is that of N-acyl-L-amino acid amidohydrolase (amaA) from Geobacillus stearothermophilus (Bacillus stearothermophilus).